A 183-amino-acid polypeptide reads, in one-letter code: UPF0114 protein HI_0507 (183 aa).

The next 3 helical transmembrane spans lie at 30–50 (LQVP…YKFI), 68–88 (IMLG…LVMV), and 150–170 (TMMW…ALAY).

Belongs to the UPF0114 family.

It is found in the cell membrane. This Haemophilus influenzae (strain ATCC 51907 / DSM 11121 / KW20 / Rd) protein is UPF0114 protein HI_0507.